Here is a 1400-residue protein sequence, read N- to C-terminus: MNQEVMNLFNPQAPAQTFDSIRISIASPEKILSWSYGEIKKPETINYRTFKPERDGLFCARIFGPIKDYECLCGKYKRMKYKGIICEKCGVEVTLSRVRRERMGHIELAAPVAHIWFLKSLPSRIGTLLDMTLKDIERVLYFENYIVTEPGLTSLKEHQLLSEEEYMIAVDEFGEDQFTALIGAEAIYELLASMELEKIAADLRVDLAETTSDLKQKKLMKRLKIVENFLESGNRPEWMIMKIVPVIPPDLRPLVPLDGGRFATSDLNDLYRRVINRNNRLKRLIELRAPGIIIRNEKRMLQEAVDALFDNGRRGRVITGANKRPLKSLSDMLKGKQGRFRQNLLGKRVDYSGRSVIVTGPELKLHQCGLPKKMALELFKPFIYARLDAKGYSSTVKQAKKLVEKERPEVWDILDEVIREHPVLLNRAPTLHRLGIQAFEPTLIEGKAIQLHPLVCTAFNADFDGDQMAVHVPLSLEAQLEARVLMMSTNNILHPANGAPIIVPSQDMVLGLYYLSIVADKEPGEGMMFADMGELQHALENKVVTLHTKIKGRFKTVDAEGKPVSKIYDTTPGRMITGELLPKNVNVPFDICNQEMTKKNISKMIDHVYRHCGQKETVIFCDRIMQLGFAHACRAGISFGKDDMVIPDTKAKIVADTEALTTEYEQQYNDGLITQGEKYNKVVDAWGKATDKITEEMMARLKAVEFDPVTGRQKQMNSVYMMSHSGARGSVNQMRQLGGMRGLMAKPSGEIIETPIISNFKEGLTVNEYFNSTHGARKGLADTALKTANSGYLTRRLVDVAQDAIISEVDCGAEIGLTMQPIVDAGQIVASIGQRVLGRTALDPILHPTTGEVIVEAGRMIEEKDVEIIEKAAIQSIRIRSALTCETRNGVCAKCYGRDLARGTPVNQGEAVGVIAAQSIGEPGTQLTMRTFHLGGTAQVVDSSYLEASYEGTVKLRNRNVVRNSDGNLVVMGRNMAVLILDNTGKERAVHRVTYGSRLFVDEADTVKRGQRIAEWDPYTRPIMTEVEGYVEFEDLVDGLSVSESADESTGITKRVVIDWRSTPRGSDLKPAMVIKDKAGKILKLSKGGDARFMLSVESILSVEPGAHVKAGDVIARLPMESAKTKDITGGLPRVAELFEARRPKDHAVIAEIDGTVRFGRDYKNKRRIIIEPNDDTIEPVEYLIPKGKPFHLQDGDVIEKGEYILDGNPAPHDILAIKGVEALASYLVNEIQEVYRLQGVLINDKHIEVIVRQMLQKVEITESGDTGYIPGDHVDRIELEEINERLIEEGKKPGSGNPVLLGITKASLQTPSFISAASFQETTRVLTEAAVAGKMDTLQGLKENVIVGRLIPAGTGGMTNQIRRIATARDELIIDERRKSSGSTEANAMLVDMTNNAAE.

4 residues coordinate Zn(2+): Cys-71, Cys-73, Cys-86, and Cys-89. Mg(2+) contacts are provided by Asp-462, Asp-464, and Asp-466. Positions 811, 885, 892, and 895 each coordinate Zn(2+).

Belongs to the RNA polymerase beta' chain family. The RNAP catalytic core consists of 2 alpha, 1 beta, 1 beta' and 1 omega subunit. When a sigma factor is associated with the core the holoenzyme is formed, which can initiate transcription. Mg(2+) is required as a cofactor. Requires Zn(2+) as cofactor.

The catalysed reaction is RNA(n) + a ribonucleoside 5'-triphosphate = RNA(n+1) + diphosphate. DNA-dependent RNA polymerase catalyzes the transcription of DNA into RNA using the four ribonucleoside triphosphates as substrates. This Brucella anthropi (strain ATCC 49188 / DSM 6882 / CCUG 24695 / JCM 21032 / LMG 3331 / NBRC 15819 / NCTC 12168 / Alc 37) (Ochrobactrum anthropi) protein is DNA-directed RNA polymerase subunit beta'.